The following is a 416-amino-acid chain: Tyrosine-protein phosphatase non-receptor type 2 (416 aa).

The 271-residue stretch at 5 to 275 folds into the Tyrosine-protein phosphatase domain; sequence IEREFEELDA…RFSYMAIIEG (271 aa). Tyr-22 is subject to Phosphotyrosine. A Phosphoserine modification is found at Ser-52. Tyr-68 is subject to Phosphotyrosine. Substrate contacts are provided by residues Asp-182, 216–222, and Gln-260; that span reads CSAGIGR. Residue Cys-216 is the Phosphocysteine intermediate of the active site. S-nitrosocysteine is present on Cys-216. Phosphoserine is present on residues Ser-293, Ser-298, Ser-304, Ser-320, and Ser-339. Residues 341–410 form an endoplasmic reticulum location region; the sequence is ESILRKRIRE…WTLLFQLNVL (70 aa). The may mediate interaction with STX17 stretch occupies residues 371-410; sequence ERKRKRWLYWQPILTKMGFVSVILVGALVGWTLLFQLNVL.

The protein belongs to the protein-tyrosine phosphatase family. Non-receptor class 1 subfamily. Interacts with RMDN3. Interacts with TMED9. Interacts with STX17; dephosphorylates STX17. Interacts with ITGA1 (via cytoplasmic domain); activates the phosphatase activity towards EGFR. Interacts with TRAF2; probably involved in tumor necrosis factor-mediated signaling. Interacts with MET. Interacts with FAM220A and STAT3; interaction with FAM220A promotes interaction of PTPN2 with transcriptional activator STAT3, leading to dephosphorylation of STAT3 by PTPN2 and negative regulation of STAT3 transcriptional activator activity. In terms of processing, specifically phosphorylated in a cell cycle-dependent manner by cyclin-dependent kinases CDK1 and CDK2. Probably activated through phosphorylation by PKR. In terms of tissue distribution, does not show tissue- or cell-type specificity although levels of transcription show variability. Macrophages showed higher levels of expression than lymphocytes.

Its subcellular location is the cytoplasm. It is found in the endoplasmic reticulum-Golgi intermediate compartment. The protein resides in the endoplasmic reticulum. It localises to the nucleus membrane. The protein localises to the nucleus. Its subcellular location is the cell membrane. The catalysed reaction is O-phospho-L-tyrosyl-[protein] + H2O = L-tyrosyl-[protein] + phosphate. Its function is as follows. Non-receptor type tyrosine-specific phosphatase that dephosphorylates receptor protein tyrosine kinases including INSR, EGFR, CSF1R, PDGFR. Also dephosphorylates non-receptor protein tyrosine kinases like JAK1, JAK2, JAK3, Src family kinases, STAT1, STAT3 and STAT6 either in the nucleus or the cytoplasm. Negatively regulates numerous signaling pathways and biological processes like hematopoiesis, inflammatory response, cell proliferation and differentiation, and glucose homeostasis. Plays a multifaceted and important role in the development of the immune system. Functions in T-cell receptor signaling through dephosphorylation of FYN and LCK to control T-cells differentiation and activation. Dephosphorylates CSF1R, negatively regulating its downstream signaling and macrophage differentiation. Negatively regulates cytokine (IL2/interleukin-2 and interferon)-mediated signaling through dephosphorylation of the cytoplasmic kinases JAK1, JAK3 and their substrate STAT1, that propagate signaling downstream of the cytokine receptors. Also regulates the IL6/interleukin-6 and IL4/interleukin-4 cytokine signaling through dephosphorylation of STAT3 and STAT6 respectively. In addition to the immune system, it is involved in anchorage-dependent, negative regulation of EGF-stimulated cell growth. Activated by the integrin ITGA1/ITGB1, it dephosphorylates EGFR and negatively regulates EGF signaling. Dephosphorylates PDGFRB and negatively regulates platelet-derived growth factor receptor-beta signaling pathway and therefore cell proliferation. Negatively regulates tumor necrosis factor-mediated signaling downstream via MAPK through SRC dephosphorylation. May also regulate the hepatocyte growth factor receptor signaling pathway through dephosphorylation of the hepatocyte growth factor receptor MET. Also plays an important role in glucose homeostasis. For instance, negatively regulates the insulin receptor signaling pathway through the dephosphorylation of INSR and control gluconeogenesis and liver glucose production through negative regulation of the IL6 signaling pathways. May also bind DNA. This is Tyrosine-protein phosphatase non-receptor type 2 (Ptpn2) from Rattus norvegicus (Rat).